The chain runs to 604 residues: MGAALGTGTRLAPWPGRACGALPRWTPTAPAQGCHSKPGPARPVPLKKRGYDVTRNPHLNKGMAFTLEERLQLGIHGLIPPCFLSQDVQLLRIMRYYERQQSDLDKYIILMTLQDRNEKLFYRVLTSDVEKFMPIVYTPTVGLACQHYGLTFRRPRGLFITIHDKGHLATMLNSWPEDNIKAVVVTDGERILGLGDLGCYGMGIPVGKLALYTACGGVNPQQCLPVLLDVGTNNEELLRDPLYIGLKHQRVHGKAYDDLLDEFMQAVTDKFGINCLIQFEDFANANAFRLLNKYRNKYCMFNDDIQGTASVAVAGILAALRITKNKLSNHVFVFQGAGEAAMGIAHLLVMALEKEGVPKAEATRKIWMVDSKGLIVKGRSHLNHEKEMFAQDHPEVNSLEEVVRLVKPTAIIGVAAIAGAFTEQILRDMASFHERPIIFALSNPTSKAECTAEKCYRVTEGRGIFASGSPFKSVTLEDGKTFIPGQGNNAYVFPGVALGVIAGGIRHIPDEIFLLTAEQIAQEVSEQHLSQGRLYPPLSTIRDVSLRIAIKVLDYAYKHNLASYYPEPKDKEAFVRSLVYTPDYDSFTLDSYTWPKEAMNVQTV.

The tract at residues 29–50 (APAQGCHSKPGPARPVPLKKRG) is disordered. Tyr-137 (proton donor) is an active-site residue. Arg-190 contacts NAD(+). Residue Lys-208 is the Proton acceptor of the active site. Residues Glu-280, Asp-281, and Asp-304 each coordinate a divalent metal cation. Asp-304 contacts NAD(+). The residue at position 371 (Ser-371) is a Phosphoserine. Asn-443 is a binding site for NAD(+).

It belongs to the malic enzymes family. It depends on Mg(2+) as a cofactor. Mn(2+) is required as a cofactor. As to expression, expressed predominantly in organs with a low-division rate.

It localises to the mitochondrion matrix. The catalysed reaction is (S)-malate + NADP(+) = pyruvate + CO2 + NADPH. The enzyme catalyses oxaloacetate + H(+) = pyruvate + CO2. Catalyzes the oxidative decarboxylation of (S)-malate to pyruvate using NADP(+) as a cofactor. Can also reverse the decarboxylation reaction, but only with significantly lower efficiency. The chain is NADP-dependent malic enzyme, mitochondrial from Homo sapiens (Human).